Consider the following 221-residue polypeptide: Lipoprotein-releasing system ATP-binding protein LolD (221 aa).

The 215-residue stretch at 6–220 folds into the ABC transporter domain; it reads LILKKISKHY…YNLKNGLLNI (215 aa). 42-49 contacts ATP; sequence GSSGSGKS.

It belongs to the ABC transporter superfamily. Lipoprotein translocase (TC 3.A.1.125) family. In terms of assembly, the complex is composed of two ATP-binding proteins (LolD) and two transmembrane proteins (LolC and LolE).

Its subcellular location is the cell inner membrane. Part of the ABC transporter complex LolCDE involved in the translocation of mature outer membrane-directed lipoproteins, from the inner membrane to the periplasmic chaperone, LolA. Responsible for the formation of the LolA-lipoprotein complex in an ATP-dependent manner. The chain is Lipoprotein-releasing system ATP-binding protein LolD from Rickettsia typhi (strain ATCC VR-144 / Wilmington).